The sequence spans 121 residues: UPF0102 protein BVU_1879 (121 aa).

It belongs to the UPF0102 family.

The polypeptide is UPF0102 protein BVU_1879 (Phocaeicola vulgatus (strain ATCC 8482 / DSM 1447 / JCM 5826 / CCUG 4940 / NBRC 14291 / NCTC 11154) (Bacteroides vulgatus)).